We begin with the raw amino-acid sequence, 429 residues long: Serine hydroxymethyltransferase (429 aa).

(6S)-5,6,7,8-tetrahydrofolate is bound by residues leucine 126 and 130-132; that span reads GHL. Lysine 235 carries the N6-(pyridoxal phosphate)lysine modification. 359–361 contributes to the (6S)-5,6,7,8-tetrahydrofolate binding site; that stretch reads SPF.

This sequence belongs to the SHMT family. As to quaternary structure, homodimer. It depends on pyridoxal 5'-phosphate as a cofactor.

The protein resides in the cytoplasm. The catalysed reaction is (6R)-5,10-methylene-5,6,7,8-tetrahydrofolate + glycine + H2O = (6S)-5,6,7,8-tetrahydrofolate + L-serine. It participates in one-carbon metabolism; tetrahydrofolate interconversion. The protein operates within amino-acid biosynthesis; glycine biosynthesis; glycine from L-serine: step 1/1. Its function is as follows. Catalyzes the reversible interconversion of serine and glycine with tetrahydrofolate (THF) serving as the one-carbon carrier. This reaction serves as the major source of one-carbon groups required for the biosynthesis of purines, thymidylate, methionine, and other important biomolecules. Also exhibits THF-independent aldolase activity toward beta-hydroxyamino acids, producing glycine and aldehydes, via a retro-aldol mechanism. This is Serine hydroxymethyltransferase from Prochlorococcus marinus (strain MIT 9313).